The chain runs to 416 residues: Glutamyl-tRNA reductase (416 aa).

Substrate contacts are provided by residues 48-51 (TCNR), serine 104, 109-111 (EPQ), and glutamine 115. The Nucleophile role is filled by cysteine 49. 184-189 (GAGEMI) is an NADP(+) binding site.

It belongs to the glutamyl-tRNA reductase family. As to quaternary structure, homodimer.

It catalyses the reaction (S)-4-amino-5-oxopentanoate + tRNA(Glu) + NADP(+) = L-glutamyl-tRNA(Glu) + NADPH + H(+). It participates in porphyrin-containing compound metabolism; protoporphyrin-IX biosynthesis; 5-aminolevulinate from L-glutamyl-tRNA(Glu): step 1/2. Functionally, catalyzes the NADPH-dependent reduction of glutamyl-tRNA(Glu) to glutamate 1-semialdehyde (GSA). This is Glutamyl-tRNA reductase from Dechloromonas aromatica (strain RCB).